We begin with the raw amino-acid sequence, 101 residues long: Small ribosomal subunit protein bS18c (101 aa).

Over residues 1-19 the composition is skewed to basic residues; the sequence is MDKSKRPFRKSKRSFRRRL. Disordered stretches follow at residues 1 to 23 and 82 to 101; these read MDKS…PPIG and KQFE…TRNK.

The protein belongs to the bacterial ribosomal protein bS18 family. Part of the 30S ribosomal subunit.

It localises to the plastid. The protein localises to the chloroplast. This is Small ribosomal subunit protein bS18c from Drimys granadensis.